The sequence spans 238 residues: Flagellar L-ring protein (238 aa).

Residues 1–17 (MKRRLLAAGCAMLLLSG) form the signal peptide. Residue Cys-18 is the site of N-palmitoyl cysteine attachment. Cys-18 carries S-diacylglycerol cysteine lipidation. The segment at 22–50 (RQQPSPVPPVTQPQAYAEPEDTAANPGSL) is disordered.

The protein belongs to the FlgH family. As to quaternary structure, the basal body constitutes a major portion of the flagellar organelle and consists of four rings (L,P,S, and M) mounted on a central rod.

It localises to the cell outer membrane. It is found in the bacterial flagellum basal body. In terms of biological role, assembles around the rod to form the L-ring and probably protects the motor/basal body from shearing forces during rotation. The sequence is that of Flagellar L-ring protein from Nitratidesulfovibrio vulgaris (strain DSM 19637 / Miyazaki F) (Desulfovibrio vulgaris).